Reading from the N-terminus, the 260-residue chain is RxLR effector protein BLR38 (260 aa).

An N-terminal signal peptide occupies residues 1 to 18 (MHCTVFFLLIACAKSSYG). The RxLR signature appears at 46-49 (RLLR). Positions 136-148 (MPSSRKRPRALDE) match the Nuclear localuization signal (NLS) motif.

This sequence belongs to the RxLR effector family.

The protein resides in the secreted. Its subcellular location is the host nucleus. Secreted effector that triggers a robust hypersensitive response (HR) in Lactuca serriola LS102. The response to BLN06 was visible as strong necrosis. Although effector recognition is frequently associated with single dominant R gene loci, the recognition of BLR38 requires 2 unlinked loci that display incomplete dominance. The chain is RxLR effector protein BLR38 from Bremia lactucae (Lettuce downy mildew).